Here is a 417-residue protein sequence, read N- to C-terminus: Carboxypeptidase B (417 aa).

Residues 1–15 form the signal peptide; the sequence is MLALLVLVTVALASA. The propeptide at 16–110 is activation peptide; the sequence is HHGGEHFEGE…VEAQFDSRVR (95 aa). Residues 118–412 form the Peptidase M14 domain; it reads KYNKWETIEA…LAIKYVASYV (295 aa). C173 and C186 form a disulfide bridge. Residues H176 and E179 each coordinate Zn(2+). Substrate contacts are provided by residues 176–179, R234, and 251–252; these read HARE and NR. Disulfide bonds link C245/C268 and C259/C273. Residue H304 coordinates Zn(2+). Residues 305–306 and Y356 each bind substrate; that span reads SY. E378 serves as the catalytic Proton donor/acceptor.

This sequence belongs to the peptidase M14 family. Zn(2+) serves as cofactor. Pancreas.

The protein localises to the secreted. Its subcellular location is the zymogen granule lumen. It carries out the reaction Preferential release of a C-terminal lysine or arginine amino acid.. This Homo sapiens (Human) protein is Carboxypeptidase B (CPB1).